A 180-amino-acid chain; its full sequence is Large ribosomal subunit protein uL5 (180 aa).

The protein belongs to the universal ribosomal protein uL5 family. As to quaternary structure, part of the 50S ribosomal subunit; part of the 5S rRNA/L5/L18/L25 subcomplex. Contacts the 5S rRNA and the P site tRNA. Forms a bridge to the 30S subunit in the 70S ribosome.

In terms of biological role, this is one of the proteins that bind and probably mediate the attachment of the 5S RNA into the large ribosomal subunit, where it forms part of the central protuberance. In the 70S ribosome it contacts protein S13 of the 30S subunit (bridge B1b), connecting the 2 subunits; this bridge is implicated in subunit movement. Contacts the P site tRNA; the 5S rRNA and some of its associated proteins might help stabilize positioning of ribosome-bound tRNAs. This is Large ribosomal subunit protein uL5 from Gloeothece citriformis (strain PCC 7424) (Cyanothece sp. (strain PCC 7424)).